The primary structure comprises 469 residues: ATP synthase subunit beta (469 aa).

An ATP-binding site is contributed by 156–163 (GGAGVGKT).

Belongs to the ATPase alpha/beta chains family. F-type ATPases have 2 components, CF(1) - the catalytic core - and CF(0) - the membrane proton channel. CF(1) has five subunits: alpha(3), beta(3), gamma(1), delta(1), epsilon(1). CF(0) has three main subunits: a(1), b(2) and c(9-12). The alpha and beta chains form an alternating ring which encloses part of the gamma chain. CF(1) is attached to CF(0) by a central stalk formed by the gamma and epsilon chains, while a peripheral stalk is formed by the delta and b chains.

The protein resides in the cell membrane. The enzyme catalyses ATP + H2O + 4 H(+)(in) = ADP + phosphate + 5 H(+)(out). Its function is as follows. Produces ATP from ADP in the presence of a proton gradient across the membrane. The catalytic sites are hosted primarily by the beta subunits. This chain is ATP synthase subunit beta, found in Bacillus cereus (strain AH820).